The chain runs to 104 residues: Flagellar hook-basal body complex protein FliE (104 aa).

This sequence belongs to the FliE family.

It is found in the bacterial flagellum basal body. In Pectobacterium atrosepticum (strain SCRI 1043 / ATCC BAA-672) (Erwinia carotovora subsp. atroseptica), this protein is Flagellar hook-basal body complex protein FliE.